A 187-amino-acid chain; its full sequence is Elongation factor P (187 aa).

It belongs to the elongation factor P family.

The protein resides in the cytoplasm. It functions in the pathway protein biosynthesis; polypeptide chain elongation. Involved in peptide bond synthesis. Stimulates efficient translation and peptide-bond synthesis on native or reconstituted 70S ribosomes in vitro. Probably functions indirectly by altering the affinity of the ribosome for aminoacyl-tRNA, thus increasing their reactivity as acceptors for peptidyl transferase. In Mycobacterium sp. (strain JLS), this protein is Elongation factor P.